The sequence spans 453 residues: Midnolin-A (453 aa).

In terms of domain architecture, Ubiquitin-like spans M20–G94. 4 disordered regions span residues S184–V219, C232–K256, R333–A376, and Q390–L429. Polar residues predominate over residues H206–V219. Composition is skewed to low complexity over residues S239–S252 and T338–P351. Over residues S365–A376 the composition is skewed to basic and acidic residues. Over residues Q390–R399 the composition is skewed to basic residues. The segment covering R415–S428 has biased composition (low complexity).

The protein localises to the nucleus. It is found in the cytoplasm. It localises to the cytosol. Its subcellular location is the nucleolus. Functionally, facilitates ubiquitin-independent proteasomal degradation of polycomb protein CBX4. Plays a role in inhibiting the activity of glucokinase GCK and both glucose-induced and basal insulin secretion. The chain is Midnolin-A (midn-a) from Xenopus laevis (African clawed frog).